The chain runs to 153 residues: RNA-binding protein 3 (153 aa).

In terms of domain architecture, RRM spans 6-84 (GKLFVGGLNF…RQIRVDHAGK (79 aa)). Residue Arg47 is modified to Omega-N-methylarginine. The interval 81–153 (HAGKSARGSR…GGNYRDNYDN (73 aa)) is disordered. Residues 89–112 (SRGGAFGGRGRSYSRGGGDQGYGS) are compositionally biased toward gly residues. Asymmetric dimethylarginine; alternate is present on Arg103. Dimethylated arginine; alternate is present on Arg103. Omega-N-methylarginine; alternate is present on Arg103. An omega-N-methylarginine mark is found at Arg118 and Arg128. A phosphoserine mark is found at Ser133 and Ser143. Position 151 is a phosphotyrosine (Tyr151).

Interacts with RPL4. Associates with the 60S ribosomal subunits in an RNA-independent manner. Post-translationally, arg-103 is dimethylated, probably to asymmetric dimethylarginine. Phosphorylated.

It is found in the nucleus. The protein resides in the cytoplasm. It localises to the cell projection. Its subcellular location is the dendrite. Its function is as follows. Cold-inducible mRNA binding protein that enhances global protein synthesis at both physiological and mild hypothermic temperatures. Reduces the relative abundance of microRNAs, when overexpressed. Enhances phosphorylation of translation initiation factors and active polysome formation. This is RNA-binding protein 3 (Rbm3) from Mus musculus (Mouse).